A 109-amino-acid polypeptide reads, in one-letter code: Sperm-specific class P protein 10 (109 aa).

The 108-residue stretch at 2-109 (SLTADPPACT…TVTIPMSATA (108 aa)) folds into the MSP domain.

In terms of tissue distribution, expressed at higher level in testis.

This Caenorhabditis elegans protein is Sperm-specific class P protein 10 (ssp-10).